The sequence spans 141 residues: Nucleoside diphosphate kinase (141 aa).

Residues lysine 11, phenylalanine 59, arginine 87, threonine 93, arginine 104, and asparagine 114 each contribute to the ATP site. Histidine 117 functions as the Pros-phosphohistidine intermediate in the catalytic mechanism.

The protein belongs to the NDK family. Homotetramer. Mg(2+) serves as cofactor.

The protein localises to the cytoplasm. The catalysed reaction is a 2'-deoxyribonucleoside 5'-diphosphate + ATP = a 2'-deoxyribonucleoside 5'-triphosphate + ADP. It carries out the reaction a ribonucleoside 5'-diphosphate + ATP = a ribonucleoside 5'-triphosphate + ADP. Its function is as follows. Major role in the synthesis of nucleoside triphosphates other than ATP. The ATP gamma phosphate is transferred to the NDP beta phosphate via a ping-pong mechanism, using a phosphorylated active-site intermediate. In Polynucleobacter asymbioticus (strain DSM 18221 / CIP 109841 / QLW-P1DMWA-1) (Polynucleobacter necessarius subsp. asymbioticus), this protein is Nucleoside diphosphate kinase.